The sequence spans 143 residues: Large ribosomal subunit protein uL11 (143 aa).

This sequence belongs to the universal ribosomal protein uL11 family. Part of the ribosomal stalk of the 50S ribosomal subunit. Interacts with L10 and the large rRNA to form the base of the stalk. L10 forms an elongated spine to which L12 dimers bind in a sequential fashion forming a multimeric L10(L12)X complex. In terms of processing, one or more lysine residues are methylated.

Functionally, forms part of the ribosomal stalk which helps the ribosome interact with GTP-bound translation factors. In Leptothrix cholodnii (strain ATCC 51168 / LMG 8142 / SP-6) (Leptothrix discophora (strain SP-6)), this protein is Large ribosomal subunit protein uL11.